We begin with the raw amino-acid sequence, 255 residues long: Homeobox protein Hox-D4 (255 aa).

Positions E31–L127 are disordered. A compositionally biased stretch (pro residues) spans E94 to L107. An Antp-type hexapeptide motif is present at residues V133–K138. Positions P154–H213 form a DNA-binding region, homeobox. Residues D212–L255 are disordered. The segment covering S222–S234 has biased composition (low complexity). A compositionally biased stretch (basic and acidic residues) spans A245 to L255.

This sequence belongs to the Antp homeobox family. Deformed subfamily. Forms a DNA-binding heterodimer with transcription factor PBX1.

Its subcellular location is the nucleus. Sequence-specific transcription factor which is part of a developmental regulatory system that provides cells with specific positional identities on the anterior-posterior axis. The protein is Homeobox protein Hox-D4 (HOXD4) of Homo sapiens (Human).